The following is a 64-amino-acid chain: Palmitoyl-CoA hydrolase (64 aa).

The protein belongs to the type-B carboxylesterase/lipase family. Monomer and homotrimer.

The protein resides in the microsome. Its subcellular location is the endoplasmic reticulum. The catalysed reaction is hexadecanoyl-CoA + H2O = hexadecanoate + CoA + H(+). In terms of biological role, hydrolysis of a variety of CoA thioesters of long-chain fatty acids. The protein is Palmitoyl-CoA hydrolase of Rattus norvegicus (Rat).